The primary structure comprises 111 residues: Putative pterin-4-alpha-carbinolamine dehydratase (111 aa).

The protein belongs to the pterin-4-alpha-carbinolamine dehydratase family.

It catalyses the reaction (4aS,6R)-4a-hydroxy-L-erythro-5,6,7,8-tetrahydrobiopterin = (6R)-L-erythro-6,7-dihydrobiopterin + H2O. The chain is Putative pterin-4-alpha-carbinolamine dehydratase from Chlorobaculum tepidum (strain ATCC 49652 / DSM 12025 / NBRC 103806 / TLS) (Chlorobium tepidum).